The chain runs to 300 residues: GTPase Era (300 aa).

Positions 8–176 constitute an Era-type G domain; it reads RCGYVAIVGR…EAQIAKHLPE (169 aa). A G1 region spans residues 16 to 23; the sequence is GRPNVGKS. 16–23 lines the GTP pocket; the sequence is GRPNVGKS. Residues 42 to 46 form a G2 region; that stretch reads QTTRH. Positions 63-66 are G3; sequence DTPG. Residues 63–67 and 125–128 contribute to the GTP site; these read DTPGM and NKTD. A G4 region spans residues 125-128; it reads NKTD. Residues 155–157 form a G5 region; it reads ISA. Positions 199 to 283 constitute a KH type-2 domain; sequence VREKIMRQLG…MLNLWVKVKG (85 aa).

Belongs to the TRAFAC class TrmE-Era-EngA-EngB-Septin-like GTPase superfamily. Era GTPase family. As to quaternary structure, monomer.

Its subcellular location is the cytoplasm. It is found in the cell inner membrane. In terms of biological role, an essential GTPase that binds both GDP and GTP, with rapid nucleotide exchange. Plays a role in 16S rRNA processing and 30S ribosomal subunit biogenesis and possibly also in cell cycle regulation and energy metabolism. The protein is GTPase Era of Pseudomonas putida (strain ATCC 700007 / DSM 6899 / JCM 31910 / BCRC 17059 / LMG 24140 / F1).